A 401-amino-acid chain; its full sequence is tRNA N6-adenosine threonylcarbamoyltransferase (401 aa).

Fe cation contacts are provided by H111 and H115. Substrate is bound by residues 191-195 (LASGG), D223, G236, and N336. Residue D364 coordinates Fe cation.

Belongs to the KAE1 / TsaD family. Fe(2+) serves as cofactor.

Its subcellular location is the cytoplasm. It catalyses the reaction L-threonylcarbamoyladenylate + adenosine(37) in tRNA = N(6)-L-threonylcarbamoyladenosine(37) in tRNA + AMP + H(+). In terms of biological role, required for the formation of a threonylcarbamoyl group on adenosine at position 37 (t(6)A37) in tRNAs that read codons beginning with adenine. Is involved in the transfer of the threonylcarbamoyl moiety of threonylcarbamoyl-AMP (TC-AMP) to the N6 group of A37, together with TsaE and TsaB. TsaD likely plays a direct catalytic role in this reaction. This is tRNA N6-adenosine threonylcarbamoyltransferase from Tropheryma whipplei (strain TW08/27) (Whipple's bacillus).